A 149-amino-acid polypeptide reads, in one-letter code: UPF0178 protein HEAR0259 (149 aa).

The protein belongs to the UPF0178 family.

The sequence is that of UPF0178 protein HEAR0259 from Herminiimonas arsenicoxydans.